Here is a 478-residue protein sequence, read N- to C-terminus: Puromycin-sensitive aminopeptidase-like protein (478 aa).

Residues E180 and 316-320 (GAMEN) contribute to the substrate site. Residue H352 coordinates Zn(2+). The active-site Proton acceptor is E353. Residues H356 and E375 each coordinate Zn(2+).

This sequence belongs to the peptidase M1 family. Requires Zn(2+) as cofactor.

Its function is as follows. Aminopeptidase with broad substrate specificity to several peptides. This is Puromycin-sensitive aminopeptidase-like protein (NPEPPSL1) from Homo sapiens (Human).